A 174-amino-acid polypeptide reads, in one-letter code: Probable adenylyl-sulfate kinase (174 aa).

10 to 17 contributes to the ATP binding site; that stretch reads GPSGAGKT. S84 serves as the catalytic Phosphoserine intermediate.

It belongs to the APS kinase family.

The catalysed reaction is adenosine 5'-phosphosulfate + ATP = 3'-phosphoadenylyl sulfate + ADP + H(+). Its pathway is sulfur metabolism; hydrogen sulfide biosynthesis; sulfite from sulfate: step 2/3. Functionally, catalyzes the synthesis of activated sulfate. The sequence is that of Probable adenylyl-sulfate kinase (cysC) from Pyrococcus abyssi (strain GE5 / Orsay).